The primary structure comprises 392 residues: Probable myosin light chain kinase DDB_G0271550 (392 aa).

The Protein kinase domain maps to 20 to 278 (YEFGPEIGRG…ASQCIKHPWL (259 aa)). ATP contacts are provided by residues 26–34 (IGRGAFSIV) and K49. The active-site Proton acceptor is the D142. Polar residues predominate over residues 317-326 (SQSTPNLHSA). A disordered region spans residues 317–392 (SQSTPNLHSA…NNNNNNNNNI (76 aa)). A compositionally biased stretch (low complexity) spans 327-392 (NSNTNTNSLS…NNNNNNNNNI (66 aa)).

It belongs to the protein kinase superfamily. CAMK Ser/Thr protein kinase family. CaMK subfamily.

It carries out the reaction L-seryl-[myosin light chain] + ATP = O-phospho-L-seryl-[myosin light chain] + ADP + H(+). The enzyme catalyses L-threonyl-[myosin light chain] + ATP = O-phospho-L-threonyl-[myosin light chain] + ADP + H(+). In terms of biological role, may phosphorylate a specific serine in the N-terminus of a myosin light chain. The chain is Probable myosin light chain kinase DDB_G0271550 from Dictyostelium discoideum (Social amoeba).